Consider the following 180-residue polypeptide: Ribulose bisphosphate carboxylase small subunit, chloroplastic (180 aa).

The N-terminal 57 residues, 1–57 (MVSSMMVSSAATFTRASPAQSSMVAPFTGLKSASAFPVTRKPNADLSHLPSNGGRVQ), are a transit peptide targeting the chloroplast.

The protein belongs to the RuBisCO small chain family. Heterohexadecamer of 8 large and 8 small subunits.

The protein resides in the plastid. It localises to the chloroplast. Its function is as follows. RuBisCO catalyzes two reactions: the carboxylation of D-ribulose 1,5-bisphosphate, the primary event in carbon dioxide fixation, as well as the oxidative fragmentation of the pentose substrate. Both reactions occur simultaneously and in competition at the same active site. Although the small subunit is not catalytic it is essential for maximal activity. The sequence is that of Ribulose bisphosphate carboxylase small subunit, chloroplastic from Musa acuminata (Banana).